The sequence spans 408 residues: tRNA-specific 2-thiouridylase MnmA (408 aa).

ATP contacts are provided by residues 20 to 27 (AMSGGVDS) and Leu46. Residue Cys114 is the Nucleophile of the active site. Cys114 and Cys210 form a disulfide bridge. Gly138 serves as a coordination point for ATP. Residues 160 to 162 (RDQ) are interaction with tRNA. Cys210 functions as the Cysteine persulfide intermediate in the catalytic mechanism.

This sequence belongs to the MnmA/TRMU family.

It is found in the cytoplasm. The catalysed reaction is S-sulfanyl-L-cysteinyl-[protein] + uridine(34) in tRNA + AH2 + ATP = 2-thiouridine(34) in tRNA + L-cysteinyl-[protein] + A + AMP + diphosphate + H(+). Catalyzes the 2-thiolation of uridine at the wobble position (U34) of tRNA, leading to the formation of s(2)U34. This is tRNA-specific 2-thiouridylase MnmA from Bartonella quintana (strain Toulouse) (Rochalimaea quintana).